The primary structure comprises 330 residues: Ribosomal RNA large subunit methyltransferase F (330 aa).

The protein belongs to the methyltransferase superfamily. METTL16/RlmF family.

Its subcellular location is the cytoplasm. It catalyses the reaction adenosine(1618) in 23S rRNA + S-adenosyl-L-methionine = N(6)-methyladenosine(1618) in 23S rRNA + S-adenosyl-L-homocysteine + H(+). Its function is as follows. Specifically methylates the adenine in position 1618 of 23S rRNA. This Pseudoalteromonas atlantica (strain T6c / ATCC BAA-1087) protein is Ribosomal RNA large subunit methyltransferase F.